Consider the following 324-residue polypeptide: Delta-aminolevulinic acid dehydratase (324 aa).

Residues C120, C122, and C130 each contribute to the Zn(2+) site. K195 (schiff-base intermediate with substrate) is an active-site residue. Residues R205 and R217 each coordinate 5-aminolevulinate. E233 is a Mg(2+) binding site. Residue K248 is the Schiff-base intermediate with substrate of the active site. Residues S274 and Y313 each coordinate 5-aminolevulinate.

This sequence belongs to the ALAD family. As to quaternary structure, homooctamer. It depends on Zn(2+) as a cofactor.

It catalyses the reaction 2 5-aminolevulinate = porphobilinogen + 2 H2O + H(+). It participates in porphyrin-containing compound metabolism; protoporphyrin-IX biosynthesis; coproporphyrinogen-III from 5-aminolevulinate: step 1/4. Its function is as follows. Catalyzes an early step in the biosynthesis of tetrapyrroles. Binds two molecules of 5-aminolevulinate per subunit, each at a distinct site, and catalyzes their condensation to form porphobilinogen. The polypeptide is Delta-aminolevulinic acid dehydratase (hemB) (Bacillus subtilis (strain 168)).